Consider the following 62-residue polypeptide: Large ribosomal subunit protein bL32 (62 aa).

This sequence belongs to the bacterial ribosomal protein bL32 family.

This chain is Large ribosomal subunit protein bL32, found in Levilactobacillus brevis (strain ATCC 367 / BCRC 12310 / CIP 105137 / JCM 1170 / LMG 11437 / NCIMB 947 / NCTC 947) (Lactobacillus brevis).